A 509-amino-acid polypeptide reads, in one-letter code: Lysophospholipid acyltransferase (509 aa).

Topologically, residues 1 to 14 (MAYLIDIPFEYFSS) are lumenal. The chain crosses the membrane as a helical span at residues 15–35 (FLGVHPDQLKLLFCFLSAYPF). Residues 36–55 (AGILKRLPSAPWIRNLFSIS) lie on the Cytoplasmic side of the membrane. Residues 56-76 (IGLFYLIGVHHLYDGVLVLLF) traverse the membrane as a helical segment. Residues 77-94 (DALFTYFVAAFYRSSRMP) lie on the Lumenal side of the membrane. The chain crosses the membrane as a helical span at residues 95–115 (WIIFIVILGHTFSSHVIRYIY). Residues 116-223 (PSENTDITAS…LEPALGRCWR (108 aa)) lie on the Cytoplasmic side of the membrane. The helical transmembrane segment at 224–244 (GLLWLILFITGSSIYPLKFLL) threads the bilayer. Residues 245–246 (TP) are Lumenal-facing. The helical transmembrane segment at 247-267 (KFASSPILLKYGYVCITAFVA) threads the bilayer. Over 268–410 (RMKYYGAWEL…TPGPFKRVYD (143 aa)) the chain is Cytoplasmic. His363 is a catalytic residue. Residues 411–431 (VIGMVATNLSLSYLIISFLLL) form a helical membrane-spanning segment. Over 432–441 (NLKESIHVWK) the chain is Lumenal. Residues 442 to 462 (ELYFIVHIYILIALAVFNSPI) traverse the membrane as a helical segment. Residues 463–509 (RSKLDNKIRSRVNSYKLKSYEQSMKSTSDTDMLNMSVPKREDFENDE) lie on the Cytoplasmic side of the membrane. The disordered stretch occupies residues 488 to 509 (STSDTDMLNMSVPKREDFENDE). Ser490 carries the post-translational modification Phosphoserine. Residues 500-509 (PKREDFENDE) are compositionally biased toward basic and acidic residues.

Belongs to the membrane-bound acyltransferase family.

It localises to the endoplasmic reticulum membrane. The protein localises to the microsome membrane. It catalyses the reaction a 1-acyl-sn-glycero-3-phosphate + an acyl-CoA = a 1,2-diacyl-sn-glycero-3-phosphate + CoA. The catalysed reaction is a 1-acyl-sn-glycero-3-phosphocholine + an acyl-CoA = a 1,2-diacyl-sn-glycero-3-phosphocholine + CoA. It carries out the reaction a 1-acyl-sn-glycero-3-phosphoethanolamine + an acyl-CoA = a 1,2-diacyl-sn-glycero-3-phosphoethanolamine + CoA. In terms of biological role, membrane-bound O-acyltransferase that mediates the incorporation of unsaturated acyl chains into the sn-2 position of phospholipids. This Schizosaccharomyces pombe (strain 972 / ATCC 24843) (Fission yeast) protein is Lysophospholipid acyltransferase (ale1).